The sequence spans 188 residues: dCTP deaminase (188 aa).

DCTP is bound by residues 111-116 (KSTYAR), 135-137 (TLE), Gln156, Tyr170, and Gln180. Glu137 acts as the Proton donor/acceptor in catalysis.

The protein belongs to the dCTP deaminase family. As to quaternary structure, homotrimer.

It catalyses the reaction dCTP + H2O + H(+) = dUTP + NH4(+). The protein operates within pyrimidine metabolism; dUMP biosynthesis; dUMP from dCTP (dUTP route): step 1/2. Its function is as follows. Catalyzes the deamination of dCTP to dUTP. This chain is dCTP deaminase, found in Francisella philomiragia subsp. philomiragia (strain ATCC 25017 / CCUG 19701 / FSC 153 / O#319-036).